The chain runs to 391 residues: Cilia- and flagella-associated protein 263 (391 aa).

A disordered region spans residues 1 to 21; it reads MTDDDSETSASETQAQEESDL. Coiled-coil stretches lie at residues 95–243 and 294–369; these read LSVD…NQEL and LRKE…LKGY.

This sequence belongs to the CFAP263 family. Forms a complex with CFAP184; the interaction is required for functional activity in cilia. Interacts with HAP1 and PCM1.

It localises to the cytoplasm. The protein localises to the cytoskeleton. The protein resides in the microtubule organizing center. Its subcellular location is the centrosome. It is found in the centriolar satellite. It localises to the cell projection. The protein localises to the cilium. Component of centriolar satellites contributing to primary cilium formation. In complex with CFAP263, acts as a regulator of ciliary beating that connects radial spoke 3 (RS3) to the inner dynein arm (IDA) and the nexin-dynein regulatory complex (N-DRC). The complex is positioned parallel to N-DRC and forms a connection between the arch at the base of RS3, the IDA tail and N-DRC. The sequence is that of Cilia- and flagella-associated protein 263 (CFAP263) from Bos taurus (Bovine).